Here is a 284-residue protein sequence, read N- to C-terminus: tRNA-splicing endonuclease (284 aa).

Active-site residues include Tyr-222, His-229, and Lys-257.

This sequence belongs to the tRNA-intron endonuclease family. Archaeal long subfamily. Homodimer.

The catalysed reaction is pretRNA = a 3'-half-tRNA molecule with a 5'-OH end + a 5'-half-tRNA molecule with a 2',3'-cyclic phosphate end + an intron with a 2',3'-cyclic phosphate and a 5'-hydroxyl terminus.. Its function is as follows. Endonuclease that removes tRNA introns. Cleaves pre-tRNA at the 5'- and 3'-splice sites to release the intron. The products are an intron and two tRNA half-molecules bearing 2',3' cyclic phosphate and 5'-OH termini. Recognizes a pseudosymmetric substrate in which 2 bulged loops of 3 bases are separated by a stem of 4 bp. The chain is tRNA-splicing endonuclease from Picrophilus torridus (strain ATCC 700027 / DSM 9790 / JCM 10055 / NBRC 100828 / KAW 2/3).